The primary structure comprises 369 residues: DNA replication and repair protein RecF (369 aa).

30-37 (GDNGSGKT) lines the ATP pocket.

Belongs to the RecF family.

It localises to the cytoplasm. The RecF protein is involved in DNA metabolism; it is required for DNA replication and normal SOS inducibility. RecF binds preferentially to single-stranded, linear DNA. It also seems to bind ATP. In Pseudomonas paraeruginosa (strain DSM 24068 / PA7) (Pseudomonas aeruginosa (strain PA7)), this protein is DNA replication and repair protein RecF.